The primary structure comprises 100 residues: uncharacterized protein (100 aa).

Its subcellular location is the cytoplasm. It localises to the endoplasmic reticulum. This is an uncharacterized protein from Schizosaccharomyces pombe (strain 972 / ATCC 24843) (Fission yeast).